The following is a 438-amino-acid chain: Probable phosphoglucosamine mutase (438 aa).

S91 functions as the Phosphoserine intermediate in the catalytic mechanism. Mg(2+) is bound by residues S91, D228, D230, and D232. S91 is subject to Phosphoserine.

The protein belongs to the phosphohexose mutase family. Mg(2+) is required as a cofactor. Post-translationally, activated by phosphorylation.

The catalysed reaction is alpha-D-glucosamine 1-phosphate = D-glucosamine 6-phosphate. In terms of biological role, catalyzes the conversion of glucosamine-6-phosphate to glucosamine-1-phosphate. This chain is Probable phosphoglucosamine mutase, found in Methanocella arvoryzae (strain DSM 22066 / NBRC 105507 / MRE50).